The sequence spans 618 residues: Poly(A)-specific ribonuclease PARN-like (618 aa).

Residues Ser-54, Gln-56, Asp-332, and Asn-418 each coordinate a divalent metal cation. The disordered stretch occupies residues 588–607 (ALESSDTDPDSDTKPSEIDW).

This sequence belongs to the CAF1 family. The cofactor is a divalent metal cation.

Its subcellular location is the nucleus. The protein localises to the cytoplasm. It catalyses the reaction Exonucleolytic cleavage of poly(A) to 5'-AMP.. 3'-exoribonuclease that has a preference for poly(A) tails of mRNAs, thereby efficiently degrading poly(A) tails. Exonucleolytic degradation of the poly(A) tail is often the first step in the decay of eukaryotic mRNAs. The protein is Poly(A)-specific ribonuclease PARN-like of Arabidopsis thaliana (Mouse-ear cress).